A 156-amino-acid chain; its full sequence is ATP synthase subunit b', chloroplastic (156 aa).

The chain crosses the membrane as a helical span at residues 20–42 (NGTLPLMALQFLTLMVLLNTIFY).

Belongs to the ATPase B chain family. In terms of assembly, F-type ATPases have 2 components, F(1) - the catalytic core - and F(0) - the membrane proton channel. F(1) has five subunits: alpha(3), beta(3), gamma(1), delta(1), epsilon(1). F(0) has four main subunits: a(1), b(1), b'(1) and c(10-14). The alpha and beta chains form an alternating ring which encloses part of the gamma chain. F(1) is attached to F(0) by a central stalk formed by the gamma and epsilon chains, while a peripheral stalk is formed by the delta, b and b' chains.

The protein localises to the plastid. The protein resides in the chloroplast thylakoid membrane. F(1)F(0) ATP synthase produces ATP from ADP in the presence of a proton or sodium gradient. F-type ATPases consist of two structural domains, F(1) containing the extramembraneous catalytic core and F(0) containing the membrane proton channel, linked together by a central stalk and a peripheral stalk. During catalysis, ATP synthesis in the catalytic domain of F(1) is coupled via a rotary mechanism of the central stalk subunits to proton translocation. Functionally, component of the F(0) channel, it forms part of the peripheral stalk, linking F(1) to F(0). The b'-subunit is a diverged and duplicated form of b found in plants and photosynthetic bacteria. The protein is ATP synthase subunit b', chloroplastic of Pyropia yezoensis (Susabi-nori).